The sequence spans 457 residues: tRNA modification GTPase MnmE (457 aa).

Residues R25, E87, and R126 each contribute to the (6S)-5-formyl-5,6,7,8-tetrahydrofolate site. The region spanning 223-377 (GISTAIIGRP…IEERINQLFF (155 aa)) is the TrmE-type G domain. N233 contributes to the K(+) binding site. Residues 233–238 (NVGKSS), 252–258 (TDIAGTT), and 277–280 (DTAG) contribute to the GTP site. S237 is a Mg(2+) binding site. Positions 252, 254, and 257 each coordinate K(+). T258 contributes to the Mg(2+) binding site. Residue K457 participates in (6S)-5-formyl-5,6,7,8-tetrahydrofolate binding.

The protein belongs to the TRAFAC class TrmE-Era-EngA-EngB-Septin-like GTPase superfamily. TrmE GTPase family. As to quaternary structure, homodimer. Heterotetramer of two MnmE and two MnmG subunits. K(+) serves as cofactor.

The protein resides in the cytoplasm. Its function is as follows. Exhibits a very high intrinsic GTPase hydrolysis rate. Involved in the addition of a carboxymethylaminomethyl (cmnm) group at the wobble position (U34) of certain tRNAs, forming tRNA-cmnm(5)s(2)U34. The polypeptide is tRNA modification GTPase MnmE (Streptococcus gordonii (strain Challis / ATCC 35105 / BCRC 15272 / CH1 / DL1 / V288)).